The primary structure comprises 1624 residues: Pappalysin-1 (1624 aa).

Positions 1 to 22 (MRLWSWVLRLGLLSAALGCGLA) are cleaved as a signal peptide. A propeptide spanning residues 23–81 (ERPRRVRRDPRAVRPPRPAAGPATCATRAARGRRASPPPPPGGAWEAVRVPRRRQQRAA) is cleaved from the precursor. The interval 28 to 93 (VRRDPRAVRP…AEEPSPPSRA (66 aa)) is disordered. Low complexity predominate over residues 42–51 (AGPATCATRA). Intrachain disulfides connect Cys-141/Cys-232, Cys-324/Cys-619, Cys-329/Cys-654, Cys-411/Cys-425, Cys-421/Cys-437, Cys-454/Cys-470, Cys-471/Cys-482, Cys-580/Cys-597, Cys-584/Cys-609, Cys-707/Cys-875, Cys-710/Cys-878, Cys-750/Cys-832, Cys-772/Cys-778, Cys-944/Cys-972, Cys-957/Cys-968, Cys-980/Cys-987, and Cys-996/Cys-1008. A metalloprotease region spans residues 272–583 (RGLHTPLPQL…ISEIQSCSDP (312 aa)). Residues Asn-387 and Asn-398 are each glycosylated (N-linked (GlcNAc...) asparagine). An N-linked (GlcNAc...) asparagine glycan is attached at Asn-426. N-linked (GlcNAc...) asparagine glycosylation is present at Asn-516. Zn(2+) is bound at residue His-559. Residue Glu-560 is part of the active site. Zn(2+)-binding residues include His-563 and His-569. Residues Asn-598, Asn-616, and Asn-722 are each glycosylated (N-linked (GlcNAc...) asparagine). N-linked (GlcNAc...) asparagine glycosylation occurs at Asn-822. Residue Asn-1023 is glycosylated (N-linked (GlcNAc...) asparagine). Disulfide bonds link Cys-1033–Cys-1067, Cys-1048–Cys-1136, Cys-1189–Cys-1202, Cys-1212–Cys-1266, Cys-1224–Cys-1235, Cys-1239–Cys-1277, Cys-1282–Cys-1326, Cys-1297–Cys-1307, Cys-1311–Cys-1339, Cys-1343–Cys-1396, Cys-1359–Cys-1370, Cys-1374–Cys-1407, Cys-1412–Cys-1455, Cys-1425–Cys-1435, Cys-1439–Cys-1468, Cys-1475–Cys-1536, Cys-1489–Cys-1499, Cys-1503–Cys-1551, and Cys-1555–Cys-1573. 5 Sushi domains span residues 1210–1279 (ADCP…ACEP), 1280–1341 (VDCG…LCEL), 1342–1409 (MCLA…TCVP), 1410–1470 (VTCD…VCRE), and 1473–1553 (GQCS…HCVK). N-linked (GlcNAc...) asparagine glycans are attached at residues Asn-1219 and Asn-1223. An N-linked (GlcNAc...) asparagine glycan is attached at Asn-1320. Asn-1516 carries an N-linked (GlcNAc...) asparagine glycan.

The protein belongs to the peptidase M43B family. As to quaternary structure, homodimer; disulfide-linked. In pregnancy serum, predominantly found as a disulfide-linked 2:2 heterotetramer with the proform of PRG2. Requires Zn(2+) as cofactor. As to expression, detected in kidney, spleen, brain, ovary, breast, skin, prostate, uterus, and placenta.

It is found in the secreted. The catalysed reaction is Cleavage of the 135-Met-|-Lys-136 bond in insulin-like growth factor binding protein (IGFBP)-4, and the 143-Ser-|-Lys-144 bond in IGFBP-5.. Functionally, metalloproteinase which specifically cleaves IGFBP-4 and IGFBP-5, resulting in release of bound IGF. Cleavage of IGFBP-4 is dramatically enhanced by the presence of IGF, whereas cleavage of IGFBP-5 is slightly inhibited by the presence of IGF. Isoform 2 cleaves IGFBP-4 very slowly compared to PAPP-A, but its ability to cleave IGFBP-5 is unaffected. The sequence is that of Pappalysin-1 (Pappa) from Mus musculus (Mouse).